Consider the following 266-residue polypeptide: Large ribosomal subunit protein eL8 (266 aa).

Residues Lys-11, Lys-20, and Lys-21 each participate in a glycyl lysine isopeptide (Lys-Gly) (interchain with G-Cter in SUMO2) cross-link. Lys-34 carries the N6-acetyllysine modification. Residue Lys-48 forms a Glycyl lysine isopeptide (Lys-Gly) (interchain with G-Cter in SUMO2) linkage. Lys-97 is modified (N6-acetyllysine; alternate). A Glycyl lysine isopeptide (Lys-Gly) (interchain with G-Cter in SUMO2); alternate cross-link involves residue Lys-97. Residue Lys-125 forms a Glycyl lysine isopeptide (Lys-Gly) (interchain with G-Cter in SUMO2) linkage. Position 217 is an N6-acetyllysine (Lys-217). A Glycyl lysine isopeptide (Lys-Gly) (interchain with G-Cter in SUMO2) cross-link involves residue Lys-245.

This sequence belongs to the eukaryotic ribosomal protein eL8 family. Component of the large ribosomal subunit. Interacts with CRY1. Interacts with DICER1, AGO2, TARBP2, MOV10 and EIF6; they form a large RNA-induced silencing complex (RISC).

Its subcellular location is the cytoplasm. In terms of biological role, component of the large ribosomal subunit. The ribosome is a large ribonucleoprotein complex responsible for the synthesis of proteins in the cell. The protein is Large ribosomal subunit protein eL8 (RPL7A) of Bos taurus (Bovine).